The chain runs to 418 residues: Phosphoglycerate kinase (418 aa).

The (2R)-3-phosphoglycerate site is built by Val23, Asp24, Phe25, Asn26, Gln39, Arg40, Ser63, His64, Gly66, Arg67, Leu122, Arg123, His170, and Arg171. Gly214 contributes to the ADP binding site. Gly214 serves as a coordination point for CDP. Residues Ala215 and Lys216 each coordinate AMP. Position 215 (Ala215) interacts with ATP. A Mg(2+)-binding site is contributed by Ala215. Asp219 provides a ligand contact to CDP. Asp219 lines the Mg(2+) pocket. Residue Lys220 coordinates AMP. Lys220 lines the ATP pocket. Gly238 contributes to the ADP binding site. Gly238 is a binding site for CDP. 2 residues coordinate AMP: Gly239 and Gly313. The ATP site is built by Gly239 and Gly313. CDP contacts are provided by Gly338, Ala340, and Phe343. Phe343 provides a ligand contact to ADP. An AMP-binding site is contributed by Glu344. ATP contacts are provided by Glu344, Asp375, and Thr376. Residue Asp375 participates in Mg(2+) binding.

Belongs to the phosphoglycerate kinase family. Monomer. It depends on Mg(2+) as a cofactor.

It localises to the cytoplasm. It is found in the mitochondrion. It catalyses the reaction (2R)-3-phosphoglycerate + ATP = (2R)-3-phospho-glyceroyl phosphate + ADP. The protein operates within carbohydrate degradation; glycolysis; pyruvate from D-glyceraldehyde 3-phosphate: step 2/5. Its function is as follows. Catalyzes one of the two ATP producing reactions in the glycolytic pathway via the reversible conversion of 1,3-diphosphoglycerate to 3-phosphoglycerate. Both L- and D- forms of purine and pyrimidine nucleotides can be used as substrates, but the activity is much lower on pyrimidines. Negatively regulates the biosynthesis of acetyl-CoA from pyruvate in the mitochondrion. The polypeptide is Phosphoglycerate kinase (pgk-1) (Neurospora crassa (strain ATCC 24698 / 74-OR23-1A / CBS 708.71 / DSM 1257 / FGSC 987)).